Here is a 145-residue protein sequence, read N- to C-terminus: D-aminoacyl-tRNA deacylase (145 aa).

Positions 137-138 match the Gly-cisPro motif, important for rejection of L-amino acids motif; that stretch reads GP.

The protein belongs to the DTD family. Homodimer.

The protein resides in the cytoplasm. The enzyme catalyses glycyl-tRNA(Ala) + H2O = tRNA(Ala) + glycine + H(+). The catalysed reaction is a D-aminoacyl-tRNA + H2O = a tRNA + a D-alpha-amino acid + H(+). Its function is as follows. An aminoacyl-tRNA editing enzyme that deacylates mischarged D-aminoacyl-tRNAs. Also deacylates mischarged glycyl-tRNA(Ala), protecting cells against glycine mischarging by AlaRS. Acts via tRNA-based rather than protein-based catalysis; rejects L-amino acids rather than detecting D-amino acids in the active site. By recycling D-aminoacyl-tRNA to D-amino acids and free tRNA molecules, this enzyme counteracts the toxicity associated with the formation of D-aminoacyl-tRNA entities in vivo and helps enforce protein L-homochirality. The chain is D-aminoacyl-tRNA deacylase from Pseudomonas syringae pv. syringae (strain B728a).